Here is a 406-residue protein sequence, read N- to C-terminus: Cysteine desulfurase (406 aa).

Lys226 carries the N6-(pyridoxal phosphate)lysine modification. Cys364 acts as the Cysteine persulfide intermediate in catalysis.

The protein belongs to the class-V pyridoxal-phosphate-dependent aminotransferase family. Csd subfamily. In terms of assembly, homodimer. Interacts with SufE and the SufBCD complex composed of SufB, SufC and SufD. The interaction with SufE is required to mediate the direct transfer of the sulfur atom from the S-sulfanylcysteine. Requires pyridoxal 5'-phosphate as cofactor.

It is found in the cytoplasm. It catalyses the reaction (sulfur carrier)-H + L-cysteine = (sulfur carrier)-SH + L-alanine. The enzyme catalyses L-selenocysteine + AH2 = hydrogenselenide + L-alanine + A + H(+). It participates in cofactor biosynthesis; iron-sulfur cluster biosynthesis. In terms of biological role, cysteine desulfurases mobilize the sulfur from L-cysteine to yield L-alanine, an essential step in sulfur metabolism for biosynthesis of a variety of sulfur-containing biomolecules. Component of the suf operon, which is activated and required under specific conditions such as oxidative stress and iron limitation. Acts as a potent selenocysteine lyase in vitro, that mobilizes selenium from L-selenocysteine. Selenocysteine lyase activity is however unsure in vivo. The sequence is that of Cysteine desulfurase from Escherichia coli O8 (strain IAI1).